The chain runs to 297 residues: Ribosomal RNA small subunit methyltransferase H (297 aa).

Residues 37 to 39 (GGH), Glu-56, Phe-87, Asp-102, and His-109 contribute to the S-adenosyl-L-methionine site.

It belongs to the methyltransferase superfamily. RsmH family.

The protein localises to the cytoplasm. The catalysed reaction is cytidine(1402) in 16S rRNA + S-adenosyl-L-methionine = N(4)-methylcytidine(1402) in 16S rRNA + S-adenosyl-L-homocysteine + H(+). Specifically methylates the N4 position of cytidine in position 1402 (C1402) of 16S rRNA. The protein is Ribosomal RNA small subunit methyltransferase H of Borrelia hermsii (strain HS1 / DAH).